The following is a 265-amino-acid chain: Mlc titration factor A (265 aa).

Zn(2+) is bound by residues histidine 111, histidine 148, histidine 152, and glutamate 211.

It belongs to the MtfA family. In terms of assembly, interacts with Mlc. Requires Zn(2+) as cofactor.

Its subcellular location is the cytoplasm. Involved in the modulation of the activity of the glucose-phosphotransferase system (glucose-PTS). Interacts with the transcriptional repressor Mlc, preventing its interaction with DNA and leading to the modulation of expression of genes regulated by Mlc, including ptsG, which encodes the PTS system glucose-specific EIICB component. Functionally, shows zinc-dependent metallopeptidase activity. The sequence is that of Mlc titration factor A from Escherichia coli O17:K52:H18 (strain UMN026 / ExPEC).